The primary structure comprises 133 residues: Profilin (133 aa).

It belongs to the profilin family.

In terms of biological role, more likely to influence phosphoinositide metabolism than actin assembly. This chain is Profilin, found in Camelus.